The following is a 164-amino-acid chain: UPF0303 protein R02983 (164 aa).

It belongs to the UPF0303 family.

The chain is UPF0303 protein R02983 from Rhizobium meliloti (strain 1021) (Ensifer meliloti).